The chain runs to 681 residues: UvrABC system protein B (681 aa).

Residues 32–419 (ARLSRGERDV…GGEYVEQVIR (388 aa)) form the Helicase ATP-binding domain. 45-52 (GATGTGKS) serves as a coordination point for ATP. Positions 98–121 (YYDYYQPEAYIAQTDTYIEKDSSI) match the Beta-hairpin motif. One can recognise a Helicase C-terminal domain in the interval 436–602 (QIDDLIHEIK…PLRKKIADIL (167 aa)). The segment covering 607–616 (ESKAESTAPS) has biased composition (polar residues). Positions 607-626 (ESKAESTAPSSDAVVVSKTN) are disordered. In terms of domain architecture, UVR spans 636 to 671 (RSLIDDLTTQMGTAARELKFELAGRLRDEIAELKKE).

Belongs to the UvrB family. Forms a heterotetramer with UvrA during the search for lesions. Interacts with UvrC in an incision complex.

It localises to the cytoplasm. The UvrABC repair system catalyzes the recognition and processing of DNA lesions. A damage recognition complex composed of 2 UvrA and 2 UvrB subunits scans DNA for abnormalities. Upon binding of the UvrA(2)B(2) complex to a putative damaged site, the DNA wraps around one UvrB monomer. DNA wrap is dependent on ATP binding by UvrB and probably causes local melting of the DNA helix, facilitating insertion of UvrB beta-hairpin between the DNA strands. Then UvrB probes one DNA strand for the presence of a lesion. If a lesion is found the UvrA subunits dissociate and the UvrB-DNA preincision complex is formed. This complex is subsequently bound by UvrC and the second UvrB is released. If no lesion is found, the DNA wraps around the other UvrB subunit that will check the other stand for damage. This is UvrABC system protein B from Corynebacterium diphtheriae (strain ATCC 700971 / NCTC 13129 / Biotype gravis).